The following is an 85-amino-acid chain: MGELGHRRTQTGVVVSDKMEKTVVVRVDRLVKHPLYNKYIKRSVKYKVHDEKNSCKAGDKVQIVECRPLSKDKRWALRQILESAA.

It belongs to the universal ribosomal protein uS17 family. As to quaternary structure, part of the 30S ribosomal subunit.

One of the primary rRNA binding proteins, it binds specifically to the 5'-end of 16S ribosomal RNA. This is Small ribosomal subunit protein uS17 from Trichlorobacter lovleyi (strain ATCC BAA-1151 / DSM 17278 / SZ) (Geobacter lovleyi).